A 220-amino-acid polypeptide reads, in one-letter code: Pyridoxine/pyridoxamine 5'-phosphate oxidase (220 aa).

Substrate contacts are provided by residues 8–11 and lysine 66; that span reads RKSY. FMN is bound by residues 61-66, 76-77, arginine 82, and lysine 83; these read RVVLIK and FT. Residues tyrosine 123, arginine 127, and serine 131 each coordinate substrate. Residues 140-141 and tryptophan 184 contribute to the FMN site; that span reads QS. 190–192 provides a ligand contact to substrate; it reads RLH. FMN is bound at residue arginine 194.

The protein belongs to the pyridoxamine 5'-phosphate oxidase family. Homodimer. FMN is required as a cofactor.

The enzyme catalyses pyridoxamine 5'-phosphate + O2 + H2O = pyridoxal 5'-phosphate + H2O2 + NH4(+). It catalyses the reaction pyridoxine 5'-phosphate + O2 = pyridoxal 5'-phosphate + H2O2. The protein operates within cofactor metabolism; pyridoxal 5'-phosphate salvage; pyridoxal 5'-phosphate from pyridoxamine 5'-phosphate: step 1/1. Its pathway is cofactor metabolism; pyridoxal 5'-phosphate salvage; pyridoxal 5'-phosphate from pyridoxine 5'-phosphate: step 1/1. Catalyzes the oxidation of either pyridoxine 5'-phosphate (PNP) or pyridoxamine 5'-phosphate (PMP) into pyridoxal 5'-phosphate (PLP). The chain is Pyridoxine/pyridoxamine 5'-phosphate oxidase from Albidiferax ferrireducens (strain ATCC BAA-621 / DSM 15236 / T118) (Rhodoferax ferrireducens).